Reading from the N-terminus, the 299-residue chain is UPF0603 protein OsI_019212, chloroplastic (299 aa).

Composition is skewed to low complexity over residues 1 to 14 (METL…LSPL) and 22 to 36 (ASPA…SSPA). The N-terminal 41 residues, 1 to 41 (METLLSPSTLLSPLRGSKKKPASPAASASSSSSSPARSVVS), are a transit peptide targeting the chloroplast. Disordered regions lie at residues 1 to 60 (METL…WRGD) and 244 to 265 (PDPG…TKEE). The transit peptide at 42–98 (CALRRQQPPPQAVAAWRGDGGRGGGVGSWATFLQHGLAAAALSLAISMAPAPAPAVA) directs the protein to the thylakoid. The span at 252–265 (KDNKRESNFKTKEE) shows a compositional bias: basic and acidic residues. The helical transmembrane segment at 276 to 296 (VVGGLLVIAFVVPMAQYYAYI) threads the bilayer.

It belongs to the UPF0603 family.

The protein localises to the plastid. It localises to the chloroplast thylakoid membrane. The sequence is that of UPF0603 protein OsI_019212, chloroplastic from Oryza sativa subsp. indica (Rice).